A 1038-amino-acid chain; its full sequence is GTPase-activating Rap/Ran-GAP domain-like protein 3 (1038 aa).

Lys6 and Ser68 each carry phosphoserine. Residues 214 to 430 (LLVLEEQEGS…RTLDMLIRSL (217 aa)) enclose the Rap-GAP domain. Ser449 and Ser455 each carry phosphoserine. The 313-residue stretch at 512 to 824 (PHEAVCADPW…QLVASRSDIY (313 aa)) folds into the CNH domain. Disordered stretches follow at residues 833 to 863 (EGSSGGSSKGASAHTSPQTPPARDTPLFPSS) and 937 to 1038 (LLGL…IDLK). The residue at position 851 (Thr851) is a Phosphothreonine. A compositionally biased stretch (polar residues) spans 1019–1028 (SGSSPFQLMA).

This sequence belongs to the GARNL3 family.

This Mus musculus (Mouse) protein is GTPase-activating Rap/Ran-GAP domain-like protein 3 (Garnl3).